The chain runs to 368 residues: F-box/kelch-repeat protein At5g51250 (368 aa).

Positions 1-44 constitute an F-box domain; the sequence is MSSLPDDLLLSIFARISRLYYPTLSLVSKSFRSLLASPDLYKAR. Kelch repeat units follow at residues 116-163, 165-218, and 260-304; these read DIYN…VLDR, IYVA…CIDG, and LFYI…YGGK.

This Arabidopsis thaliana (Mouse-ear cress) protein is F-box/kelch-repeat protein At5g51250.